The primary structure comprises 152 residues: Xanthine-guanine phosphoribosyltransferase (152 aa).

5-phospho-alpha-D-ribose 1-diphosphate is bound by residues 37-38 (RG), Arg-69, and 88-96 (DDLVDTGGT). Residue Arg-69 coordinates GMP. Asp-89 lines the Mg(2+) pocket. Residues Asp-92 and Ile-135 each coordinate guanine. Positions 92 and 135 each coordinate xanthine. Residues 92 to 96 (DTGGT) and 134 to 135 (WI) each bind GMP.

This sequence belongs to the purine/pyrimidine phosphoribosyltransferase family. XGPT subfamily. Homotetramer. It depends on Mg(2+) as a cofactor.

Its subcellular location is the cell inner membrane. The catalysed reaction is GMP + diphosphate = guanine + 5-phospho-alpha-D-ribose 1-diphosphate. The enzyme catalyses XMP + diphosphate = xanthine + 5-phospho-alpha-D-ribose 1-diphosphate. It catalyses the reaction IMP + diphosphate = hypoxanthine + 5-phospho-alpha-D-ribose 1-diphosphate. The protein operates within purine metabolism; GMP biosynthesis via salvage pathway; GMP from guanine: step 1/1. Its pathway is purine metabolism; XMP biosynthesis via salvage pathway; XMP from xanthine: step 1/1. Purine salvage pathway enzyme that catalyzes the transfer of the ribosyl-5-phosphate group from 5-phospho-alpha-D-ribose 1-diphosphate (PRPP) to the N9 position of the 6-oxopurines guanine and xanthine to form the corresponding ribonucleotides GMP (guanosine 5'-monophosphate) and XMP (xanthosine 5'-monophosphate), with the release of PPi. To a lesser extent, also acts on hypoxanthine. In Shigella boydii serotype 4 (strain Sb227), this protein is Xanthine-guanine phosphoribosyltransferase.